Consider the following 127-residue polypeptide: Stationary phase protein 3 (127 aa).

Helical transmembrane passes span 29–49 (LFLF…FYVI) and 63–83 (ANSI…CFFL). The N-linked (GlcNAc...) asparagine glycan is linked to Asn-86.

The protein localises to the membrane. In terms of biological role, required for survival during stationary phase. In Saccharomyces cerevisiae (strain ATCC 204508 / S288c) (Baker's yeast), this protein is Stationary phase protein 3 (SPG3).